The sequence spans 639 residues: RNA polymerase II elongation factor ELL2 (639 aa).

Disordered regions lie at residues 175 to 203 (DTVPERKRSTPMNPANTIRKMHSGNSVSQ), 291 to 326 (LNPSQNASTSRSESPLCSSKDAASSPQKRPLDSDFI), 378 to 416 (PSTHLPVSNPPQTVNSNSNSPSTPEGLGTQDLPVDSFSQ), and 439 to 513 (PSSA…EGCT). The segment covering 291-317 (LNPSQNASTSRSESPLCSSKDAASSPQ) has biased composition (polar residues). The segment covering 378-401 (PSTHLPVSNPPQTVNSNSNSPSTP) has biased composition (low complexity). Residues 457–469 (SHKKSKKKSKKHK) are compositionally biased toward basic residues. Basic and acidic residues predominate over residues 470 to 479 (EKDQIKKLDI). Residues 480 to 490 (ETMEEKEEDLQ) show a composition bias toward acidic residues. Phosphoserine is present on residues serine 501 and serine 579. The OCEL domain occupies 525–635 (PDYLIKYIAI…LIGEFDQQQA (111 aa)).

It belongs to the ELL/occludin family. As to quaternary structure, component of the super elongation complex (SEC), at least composed of EAF1, EAF2, CDK9, MLLT3/AF9, AFF (AFF1 or AFF4), the P-TEFb complex and ELL (ELL, ELL2 or ELL3). Component of the little elongation complex (LEC), at least composed of ELL (ELL, ELL2 or ELL3), ZC3H8, ICE1 and ICE2. Interacts with AFF4; the interaction is direct and leads to stabilize ELL2 and prevent ELL2 ubiquitination. Interacts with EAF1 and EAF2. Post-translationally, ubiquitinated by SIAH1, leading to its degradation by the proteasome. Interaction with AFF4 stabilizes ELL2 and prevents ELL2 ubiquitination.

It localises to the nucleus. Its function is as follows. Elongation factor component of the super elongation complex (SEC), a complex required to increase the catalytic rate of RNA polymerase II transcription by suppressing transient pausing by the polymerase at multiple sites along the DNA. Component of the little elongation complex (LEC), a complex required to regulate small nuclear RNA (snRNA) gene transcription by RNA polymerase II and III. Plays a role in immunoglobulin secretion in plasma cells: directs efficient alternative mRNA processing, influencing both proximal poly(A) site choice and exon skipping, as well as immunoglobulin heavy chain (IgH) alternative processing. Probably acts by regulating histone modifications accompanying transition from membrane-specific to secretory IgH mRNA expression. This chain is RNA polymerase II elongation factor ELL2 (Ell2), found in Mus musculus (Mouse).